We begin with the raw amino-acid sequence, 1699 residues long: Hybrid signal transduction histidine kinase E (1699 aa).

Disordered regions lie at residues 1–32 (MDKLKINNNLSPPSSPSSSTTTPNLSSTNLEN) and 58–97 (NNIIINNNNNNNNNNNNNNNNNNNNSNNNNNNINNNNPNV). The segment covering 7-32 (NNNLSPPSSPSSSTTTPNLSSTNLEN) has biased composition (low complexity). 6 consecutive transmembrane segments (helical) span residues 142–162 (CILLGECGVYVFIYMFFLIFL), 164–184 (SFYPIFICGIVSMIVLYIVST), 191–211 (LVALIYIFVQSILNFTFFLQI), 238–258 (LNFLFIMNLILSLISIQIFFP), 262–282 (FSITLTCSLNIFNIIIHLISI), and 295–315 (NLIVPITVSFLLSFYSYILSI). Residues 412–432 (ITNGGNNKQTSTTSANSTPRY) show a composition bias toward polar residues. 2 disordered regions span residues 412–439 (ITNGGNNKQTSTTSANSTPRYNNYNNNN) and 542–593 (LLNN…NISN). The span at 544-593 (NNNNNNNNNNNNNNNNNNNNNNNNNNSNNNNNNNSNNNNNNNNINNNISN) shows a compositional bias: low complexity. One can recognise a Histidine kinase domain in the interval 678 to 950 (TVSHEVRTPI…AFSFTSILST (273 aa)). The residue at position 681 (His-681) is a Phosphohistidine; by autocatalysis. Disordered stretches follow at residues 819–866 (NNNN…NNNN), 1018–1054 (NNNNNNNNNNNNNNNNNNNNNNNNDNNNNNNNNNDNN), 1186–1239 (KKQQ…RKSS), 1252–1294 (MVQV…NPNN), and 1351–1406 (SIPI…SPPP). Positions 1198–1212 (MGDTLSSTKSPQYTN) are enriched in polar residues. Residues 1219 to 1239 (SSSSNGSLNKSNRSNLLRKSS) show a composition bias toward low complexity. Over residues 1271 to 1282 (KGNNSNPNSTEL) the composition is skewed to polar residues. Low complexity-rich tracts occupy residues 1283 to 1294 (NSTNSVNGNPNN) and 1355 to 1392 (NINNNDNNNNNNNNNNNNNNNNNNNNNNNNNNNNNNNN). The 121-residue stretch at 1575–1695 (NALIVDDTEL…TLKDTLLKWG (121 aa)) folds into the Response regulatory domain. 4-aspartylphosphate is present on Asp-1625.

Its subcellular location is the membrane. It catalyses the reaction ATP + protein L-histidine = ADP + protein N-phospho-L-histidine.. In terms of biological role, may act in a signal transduction pathway. This protein undergoes an ATP-dependent autophosphorylation at a conserved histidine residue in the kinase core, and a phosphoryl group is then transferred to a conserved aspartate residue in the receiver domain. The polypeptide is Hybrid signal transduction histidine kinase E (dhkE) (Dictyostelium discoideum (Social amoeba)).